The following is a 754-amino-acid chain: RNA-directed RNA polymerase catalytic subunit (754 aa).

Short sequence motifs (nuclear localization signal) lie at residues 189–197 and 205–218; these read MVRREKDKR and KVPV…KHDE. A promoter-binding site region spans residues 251-258; it reads RPFSKIVE. The 197-residue stretch at 288 to 484 folds into the RdRp catalytic domain; sequence VTSLNARMNS…GINMSLEKSY (197 aa).

This sequence belongs to the influenza viruses polymerase PB1 family. Influenza RNA polymerase is composed of three subunits: PB1, PB2 and PA. Interacts (via N-terminus) with PA (via C-terminus). Interacts (via C-terminus) with PB2 (via N-terminus); this interaction is essential for transcription initiation. Phosphorylated by host PRKCA.

It is found in the host nucleus. The protein resides in the host cytoplasm. It catalyses the reaction RNA(n) + a ribonucleoside 5'-triphosphate = RNA(n+1) + diphosphate. RNA-dependent RNA polymerase which is responsible for replication and transcription of virus RNA segments. The transcription of viral mRNAs occurs by a unique mechanism called cap-snatching. 5' methylated caps of cellular mRNAs are cleaved after 10-13 nucleotides by PA. In turn, these short capped RNAs are used as primers by PB1 for transcription of viral mRNAs. During virus replication, PB1 initiates RNA synthesis and copy vRNA into complementary RNA (cRNA) which in turn serves as a template for the production of more vRNAs. In Influenza C virus (strain C/Ann Arbor/1/1950), this protein is RNA-directed RNA polymerase catalytic subunit.